The chain runs to 456 residues: Transcription factor bHLH62 (456 aa).

Residues 159–185 show a composition bias toward polar residues; sequence RTNSPFPINNEPPITTNEKMPRVSSSP. Residues 159-254 form a disordered region; sequence RTNSPFPINN…KTKSIDPYKD (96 aa). Positions 223-254 are enriched in basic and acidic residues; it reads KEIEEKEDSDPKRCKKSEENGDKTKSIDPYKD. Positions 264 to 314 constitute a bHLH domain; the sequence is QATDSHSLAERVRREKISERMKLLQDLVPGCNKVTGKALMLDEIINYVQSL.

Homodimer. In terms of tissue distribution, expressed constitutively in roots, leaves, stems, and flowers.

It is found in the nucleus. The protein is Transcription factor bHLH62 (BHLH62) of Arabidopsis thaliana (Mouse-ear cress).